Here is a 312-residue protein sequence, read N- to C-terminus: Ornithine carbamoyltransferase (312 aa).

Carbamoyl phosphate is bound by residues 60–63 (STRT), Gln-87, Arg-111, and 138–141 (HPCQ). L-ornithine contacts are provided by residues Asn-169, Asp-229, and 233–234 (SM). Residues 268 to 269 (CL) and Arg-296 each bind carbamoyl phosphate.

It belongs to the aspartate/ornithine carbamoyltransferase superfamily. OTCase family.

It is found in the cytoplasm. It carries out the reaction carbamoyl phosphate + L-ornithine = L-citrulline + phosphate + H(+). It participates in amino-acid biosynthesis; L-arginine biosynthesis; L-arginine from L-ornithine and carbamoyl phosphate: step 1/3. Reversibly catalyzes the transfer of the carbamoyl group from carbamoyl phosphate (CP) to the N(epsilon) atom of ornithine (ORN) to produce L-citrulline. The sequence is that of Ornithine carbamoyltransferase from Rhodopseudomonas palustris (strain BisA53).